The primary structure comprises 557 residues: Aerobic glycerol-3-phosphate dehydrogenase (557 aa).

21-49 (DLVIIGGGITGAGIALDASERGMKVALVE) contributes to the FAD binding site.

This sequence belongs to the FAD-dependent glycerol-3-phosphate dehydrogenase family. It depends on FAD as a cofactor.

It is found in the cytoplasm. The catalysed reaction is a quinone + sn-glycerol 3-phosphate = dihydroxyacetone phosphate + a quinol. It functions in the pathway polyol metabolism; glycerol degradation via glycerol kinase pathway; glycerone phosphate from sn-glycerol 3-phosphate (aerobic route): step 1/1. The sequence is that of Aerobic glycerol-3-phosphate dehydrogenase (glpD) from Staphylococcus aureus (strain USA300).